Here is a 99-residue protein sequence, read N- to C-terminus: Large ribosomal subunit protein uL23 (99 aa).

It belongs to the universal ribosomal protein uL23 family. As to quaternary structure, part of the 50S ribosomal subunit. Contacts protein L29, and trigger factor when it is bound to the ribosome.

In terms of biological role, one of the early assembly proteins it binds 23S rRNA. One of the proteins that surrounds the polypeptide exit tunnel on the outside of the ribosome. Forms the main docking site for trigger factor binding to the ribosome. The protein is Large ribosomal subunit protein uL23 of Clavibacter michiganensis subsp. michiganensis (strain NCPPB 382).